A 294-amino-acid polypeptide reads, in one-letter code: Deubiquitinase OTUD6B (294 aa).

Disordered stretches follow at residues 1 to 46 (MDEA…RKQL) and 67 to 120 (AFAQ…ERDE). Polar residues-rich tracts occupy residues 27–36 (KIQSMKNSVP) and 73–86 (PEPT…NGVT). Over residues 111 to 120 (KAAQEKERDE) the composition is skewed to basic and acidic residues. Positions 150–287 (LQIRQIPSDG…GEHYNSVELL (138 aa)) constitute an OTU domain. The segment at 155–161 (IPSDGHC) is cys-loop. Asp158 is a catalytic residue. The active-site Nucleophile is the Cys161. Residues 222–232 (IVNTPAWGGQL) form a variable-loop region. Positions 270–280 (YMRHAYGLGEH) are his-loop. The active site involves His280.

The enzyme catalyses Thiol-dependent hydrolysis of ester, thioester, amide, peptide and isopeptide bonds formed by the C-terminal Gly of ubiquitin (a 76-residue protein attached to proteins as an intracellular targeting signal).. In terms of biological role, deubiquitinating enzyme that may play a role in the ubiquitin-dependent regulation of different cellular processes. This is Deubiquitinase OTUD6B (otud6b) from Xenopus tropicalis (Western clawed frog).